The chain runs to 225 residues: UPF0758 protein Shew_3481 (225 aa).

Residues 102–224 enclose the MPN domain; that stretch reads ILSDPDLTRD…IVSFAERGWI (123 aa). Residues His-173, His-175, and Asp-186 each coordinate Zn(2+). The JAMM motif motif lies at 173–186; the sequence is HNHPSGGAEPSHAD.

This sequence belongs to the UPF0758 family.

In Shewanella loihica (strain ATCC BAA-1088 / PV-4), this protein is UPF0758 protein Shew_3481.